Consider the following 446-residue polypeptide: MTTILENLPAGQKVGIAFSGGLDTSAALHWMRIKGAVPYAYTANLGQPDEDDYDAIPKRAIQYGAEGARLIDCRAQLVAEGIAALQCGAFHISTAGVTYFNTTPIGRAVTGTMLVAAMKEDGVNIWGDGSTYKGNDIERFYRYGLLVNPDLKIYKPWLDQQFIDELGGRAEMSEFMRQAGFEYKMSAEKAYSTDSNLLGATHEAKDLESLESGIKIVNPIMGVAFWRDDVKIDKEEVTIRFEEGRPVALNGVEYKDAVALLLEANRIGGRHGLGMSDQIENRIIEAKSRGIYEAPGLALLYIAYERLVTGIHNEDTIEQYRENGRRLGRLLYQGRWFDPQAIMLRETAQRWVARAVTGEVTVELRRGNDYSIIGTRSPNLTYQPERLSMEKVQSMFSPRDRIGQLTMRNLDITDTRDKLRIYSQVGLLAAGESSALPKLKEDESGN.

Residues 17–25 (AFSGGLDTS) and A43 each bind ATP. Residue Y99 coordinates L-citrulline. Positions 129 and 131 each coordinate ATP. 3 residues coordinate L-aspartate: T131, N135, and D136. Residue N135 participates in L-citrulline binding. Position 136 (D136) interacts with ATP. 2 residues coordinate L-citrulline: R139 and S192. D194 serves as a coordination point for ATP. L-citrulline contacts are provided by T201, E203, and E280.

The protein belongs to the argininosuccinate synthase family. Type 2 subfamily. Homotetramer.

Its subcellular location is the cytoplasm. The catalysed reaction is L-citrulline + L-aspartate + ATP = 2-(N(omega)-L-arginino)succinate + AMP + diphosphate + H(+). The protein operates within amino-acid biosynthesis; L-arginine biosynthesis; L-arginine from L-ornithine and carbamoyl phosphate: step 2/3. The polypeptide is Argininosuccinate synthase (Burkholderia mallei (strain NCTC 10247)).